Here is a 284-residue protein sequence, read N- to C-terminus: ATP synthase subunit a (284 aa).

5 helical membrane-spanning segments follow: residues 47 to 67 (AFHL…LIFF), 108 to 128 (VAPL…MDLV), 156 to 176 (VPTA…ILII), 233 to 253 (MIFI…SLPW), and 254 to 274 (AIFH…LVIV).

Belongs to the ATPase A chain family. As to quaternary structure, F-type ATPases have 2 components, CF(1) - the catalytic core - and CF(0) - the membrane proton channel. CF(1) has five subunits: alpha(3), beta(3), gamma(1), delta(1), epsilon(1). CF(0) has three main subunits: a(1), b(2) and c(9-12). The alpha and beta chains form an alternating ring which encloses part of the gamma chain. CF(1) is attached to CF(0) by a central stalk formed by the gamma and epsilon chains, while a peripheral stalk is formed by the delta and b chains.

It localises to the cell inner membrane. Functionally, key component of the proton channel; it plays a direct role in the translocation of protons across the membrane. The sequence is that of ATP synthase subunit a from Ruthia magnifica subsp. Calyptogena magnifica.